A 311-amino-acid chain; its full sequence is 4-hydroxy-3-methylbut-2-enyl diphosphate reductase (311 aa).

Cys-12 contributes to the [4Fe-4S] cluster binding site. His-41 and His-74 together coordinate (2E)-4-hydroxy-3-methylbut-2-enyl diphosphate. Dimethylallyl diphosphate contacts are provided by His-41 and His-74. Isopentenyl diphosphate-binding residues include His-41 and His-74. Cys-96 lines the [4Fe-4S] cluster pocket. His-124 serves as a coordination point for (2E)-4-hydroxy-3-methylbut-2-enyl diphosphate. Residue His-124 participates in dimethylallyl diphosphate binding. Position 124 (His-124) interacts with isopentenyl diphosphate. The active-site Proton donor is the Glu-126. Position 167 (Thr-167) interacts with (2E)-4-hydroxy-3-methylbut-2-enyl diphosphate. Cys-197 provides a ligand contact to [4Fe-4S] cluster. 4 residues coordinate (2E)-4-hydroxy-3-methylbut-2-enyl diphosphate: Ser-225, Ser-226, Asn-227, and Ser-269. Dimethylallyl diphosphate is bound by residues Ser-225, Ser-226, Asn-227, and Ser-269. Residues Ser-225, Ser-226, Asn-227, and Ser-269 each contribute to the isopentenyl diphosphate site.

This sequence belongs to the IspH family. The cofactor is [4Fe-4S] cluster.

It catalyses the reaction isopentenyl diphosphate + 2 oxidized [2Fe-2S]-[ferredoxin] + H2O = (2E)-4-hydroxy-3-methylbut-2-enyl diphosphate + 2 reduced [2Fe-2S]-[ferredoxin] + 2 H(+). It carries out the reaction dimethylallyl diphosphate + 2 oxidized [2Fe-2S]-[ferredoxin] + H2O = (2E)-4-hydroxy-3-methylbut-2-enyl diphosphate + 2 reduced [2Fe-2S]-[ferredoxin] + 2 H(+). Its pathway is isoprenoid biosynthesis; dimethylallyl diphosphate biosynthesis; dimethylallyl diphosphate from (2E)-4-hydroxy-3-methylbutenyl diphosphate: step 1/1. It participates in isoprenoid biosynthesis; isopentenyl diphosphate biosynthesis via DXP pathway; isopentenyl diphosphate from 1-deoxy-D-xylulose 5-phosphate: step 6/6. Catalyzes the conversion of 1-hydroxy-2-methyl-2-(E)-butenyl 4-diphosphate (HMBPP) into a mixture of isopentenyl diphosphate (IPP) and dimethylallyl diphosphate (DMAPP). Acts in the terminal step of the DOXP/MEP pathway for isoprenoid precursor biosynthesis. The chain is 4-hydroxy-3-methylbut-2-enyl diphosphate reductase from Aeromonas hydrophila subsp. hydrophila (strain ATCC 7966 / DSM 30187 / BCRC 13018 / CCUG 14551 / JCM 1027 / KCTC 2358 / NCIMB 9240 / NCTC 8049).